The primary structure comprises 115 residues: Large ribosomal subunit protein bL19 (115 aa).

The protein belongs to the bacterial ribosomal protein bL19 family.

Functionally, this protein is located at the 30S-50S ribosomal subunit interface and may play a role in the structure and function of the aminoacyl-tRNA binding site. This chain is Large ribosomal subunit protein bL19, found in Yersinia pseudotuberculosis serotype O:1b (strain IP 31758).